A 752-amino-acid polypeptide reads, in one-letter code: Zinc finger protein 425 (752 aa).

The KRAB domain occupies 9–80; it reads VTFDDVALYF…EQGCLDKTRR (72 aa). 19 C2H2-type zinc fingers span residues 190 to 212, 246 to 268, 274 to 296, 302 to 324, 330 to 352, 358 to 380, 386 to 408, 414 to 436, 442 to 464, 470 to 492, 498 to 520, 526 to 548, 554 to 576, 582 to 604, 610 to 632, 638 to 660, 666 to 688, 694 to 716, and 722 to 744; these read YSCY…KRSH, FQCS…QVVH, YPCP…LCLH, FCCG…LRLH, FQCP…LTQH, FHCP…QRTH, FSCG…IRVH, FSCP…GLQH, FQCP…QRLH, FPCA…TRVH, FPCG…LKVH, FSCA…TRLH, FQCP…QRMH, FACG…LRLH, YQCP…LLQH, FSCV…IRVH, FQCP…LYKH, FQCP…LCLH, and FSCD…IAVH.

The protein belongs to the krueppel C2H2-type zinc-finger protein family.

Its subcellular location is the nucleus. The protein resides in the cytoplasm. Its function is as follows. Acts as a transcriptional repressor. This chain is Zinc finger protein 425 (ZNF425), found in Homo sapiens (Human).